A 519-amino-acid chain; its full sequence is Putative cysteine ligase BshC (519 aa).

Coiled-coil stretches lie at residues Leu51–Glu71 and Thr440–Ala464.

It belongs to the BshC family.

In terms of biological role, involved in bacillithiol (BSH) biosynthesis. May catalyze the last step of the pathway, the addition of cysteine to glucosamine malate (GlcN-Mal) to generate BSH. This chain is Putative cysteine ligase BshC, found in Exiguobacterium sibiricum (strain DSM 17290 / CCUG 55495 / CIP 109462 / JCM 13490 / 255-15).